The sequence spans 355 residues: Probable dual-specificity RNA methyltransferase RlmN (355 aa).

Glutamate 89 (proton acceptor) is an active-site residue. The 228-residue stretch at 95–322 (YENRKTVCLS…KRLGVPTSIR (228 aa)) folds into the Radical SAM core domain. The cysteines at positions 102 and 333 are disulfide-linked. Cysteine 109, cysteine 113, and cysteine 116 together coordinate [4Fe-4S] cluster. Residues 159–160 (GE), serine 191, 214–216 (SLH), and asparagine 290 each bind S-adenosyl-L-methionine. The S-methylcysteine intermediate role is filled by cysteine 333.

Belongs to the radical SAM superfamily. RlmN family. Requires [4Fe-4S] cluster as cofactor.

The protein localises to the cytoplasm. It catalyses the reaction adenosine(2503) in 23S rRNA + 2 reduced [2Fe-2S]-[ferredoxin] + 2 S-adenosyl-L-methionine = 2-methyladenosine(2503) in 23S rRNA + 5'-deoxyadenosine + L-methionine + 2 oxidized [2Fe-2S]-[ferredoxin] + S-adenosyl-L-homocysteine. It carries out the reaction adenosine(37) in tRNA + 2 reduced [2Fe-2S]-[ferredoxin] + 2 S-adenosyl-L-methionine = 2-methyladenosine(37) in tRNA + 5'-deoxyadenosine + L-methionine + 2 oxidized [2Fe-2S]-[ferredoxin] + S-adenosyl-L-homocysteine. Its function is as follows. Specifically methylates position 2 of adenine 2503 in 23S rRNA and position 2 of adenine 37 in tRNAs. This is Probable dual-specificity RNA methyltransferase RlmN from Thermus thermophilus (strain ATCC BAA-163 / DSM 7039 / HB27).